Here is a 134-residue protein sequence, read N- to C-terminus: Putative protein KRIP1 (134 aa).

A disordered region spans residues 1–134 (MSPVHRSRTS…PDPALPLQML (134 aa)). Composition is skewed to polar residues over residues 9 to 24 (TSQTQEAHKPTSTLSF), 43 to 55 (SQPNACSRQSHVS), and 64 to 79 (CSQSKVSPPGTATNPN). Over residues 119 to 128 (PAKPALPDPA) the composition is skewed to pro residues.

Abundant expression is found in prostate, restricted to cells of epithelial origin in normal and diseased glands. Very low expression is detected in pancreas and ovary.

The protein localises to the cytoplasm. It localises to the nucleus. In Homo sapiens (Human), this protein is Putative protein KRIP1 (KLKP1).